The chain runs to 184 residues: UPF0149 protein PSPA7_5968 (184 aa).

This sequence belongs to the UPF0149 family.

This Pseudomonas paraeruginosa (strain DSM 24068 / PA7) (Pseudomonas aeruginosa (strain PA7)) protein is UPF0149 protein PSPA7_5968.